The primary structure comprises 227 residues: Isopentenyl-diphosphate Delta-isomerase 1 (227 aa).

Residue K36 coordinates substrate. Residues H40 and H51 each contribute to the Mg(2+) site. Residues 49–199 (LLHRAFSVFL…EIKITPWFKI (151 aa)) form the Nudix hydrolase domain. Residues R70 and K74 each contribute to the substrate site. C86 is an active-site residue. S87 contacts substrate. Residues E146 and E148 each contribute to the Mg(2+) site. The active site involves E148. Position 176 is an N6-acetyllysine (K176). Positions 225-227 (YRM) match the Microbody targeting signal motif.

The protein belongs to the IPP isomerase type 1 family. In terms of assembly, monomer. The cofactor is Mg(2+).

Its subcellular location is the peroxisome. It catalyses the reaction isopentenyl diphosphate = dimethylallyl diphosphate. It participates in isoprenoid biosynthesis; dimethylallyl diphosphate biosynthesis; dimethylallyl diphosphate from isopentenyl diphosphate: step 1/1. In terms of biological role, catalyzes the 1,3-allylic rearrangement of the homoallylic substrate isopentenyl (IPP) to its highly electrophilic allylic isomer, dimethylallyl diphosphate (DMAPP). This is Isopentenyl-diphosphate Delta-isomerase 1 (IDI1) from Homo sapiens (Human).